A 290-amino-acid polypeptide reads, in one-letter code: MVSFNSLLVAVSAATCALAFPFEFHNGTHVFPRQSTPAGTGTNNGYFYSFWTDGGGSVTYNNGPAGEYSVTWSNADNFVAGKGWNPGSAQAISFTANYQPNGNSYLSVYGWSTNPLVEYYILEDFGTYNPAVSLTHKGTLTSDGATYDVYEGTRVNEPSIQGTATFNQYWSIRSSKRSSGTVTTANHFAAWKQLGLPLGTFNYQIVATEGYQSSGSSTVTVNPAGGVTSPIAPTGPSSVSTTPSGPSSSPSPVGTCSALYGQCGGQGWTGPTCCSSGTCKFSNNWYSQCL.

An N-terminal signal peptide occupies residues 1–19 (MVSFNSLLVAVSAATCALA). A glycan (N-linked (GlcNAc...) asparagine) is linked at N26. The region spanning 34 to 222 (QSTPAGTGTN…SSGSSTVTVN (189 aa)) is the GH11 domain. Residue E118 is the Nucleophile of the active site. E209 (proton donor) is an active-site residue. The disordered stretch occupies residues 223 to 248 (PAGGVTSPIAPTGPSSVSTTPSGPSS). Positions 234–248 (TGPSSVSTTPSGPSS) are enriched in low complexity. The CBM1 domain maps to 255–290 (TCSALYGQCGGQGWTGPTCCSSGTCKFSNNWYSQCL).

Belongs to the glycosyl hydrolase 11 (cellulase G) family.

It localises to the secreted. It catalyses the reaction Endohydrolysis of (1-&gt;4)-beta-D-xylosidic linkages in xylans.. It participates in glycan degradation; xylan degradation. Its function is as follows. Endo-1,4-beta-xylanase involved in the hydrolysis of xylan, a major structural heterogeneous polysaccharide found in plant biomass representing the second most abundant polysaccharide in the biosphere, after cellulose. The sequence is that of Endo-1,4-beta-xylanase B (xynB) from Phanerodontia chrysosporium (White-rot fungus).